Here is a 579-residue protein sequence, read N- to C-terminus: Glutamine--tRNA ligase (579 aa).

Positions 41–51 match the 'HIGH' region motif; it reads PEPNGYLHIGH. ATP is bound by residues 42-44 and 48-54; these read EPN and HIGHAKA. Aspartate 74 and tyrosine 218 together coordinate L-glutamine. ATP contacts are provided by residues threonine 237, 285–286, and 293–295; these read RL and MSK. The 'KMSKS' region motif lies at 292 to 296; that stretch reads VMSKR.

Belongs to the class-I aminoacyl-tRNA synthetase family. As to quaternary structure, monomer.

It is found in the cytoplasm. The enzyme catalyses tRNA(Gln) + L-glutamine + ATP = L-glutaminyl-tRNA(Gln) + AMP + diphosphate. This is Glutamine--tRNA ligase from Xanthomonas axonopodis pv. citri (strain 306).